The chain runs to 205 residues: Arginine exporter protein ArgO (205 aa).

6 helical membrane passes run 1-21 (MLAV…PLGP), 42-62 (LCAL…SALL), 67-87 (LLLA…GWGA), 111-131 (ILVT…DTFV), 147-167 (WFAL…AFLA), and 185-205 (LFVG…GFGL).

This sequence belongs to the LysE/ArgO transporter (TC 2.A.75) family.

The protein resides in the cell inner membrane. It carries out the reaction L-arginine(in) = L-arginine(out). Its function is as follows. Involved in the export of arginine. Important to control the intracellular level of arginine and the correct balance between arginine and lysine. The chain is Arginine exporter protein ArgO from Yersinia pseudotuberculosis serotype O:3 (strain YPIII).